We begin with the raw amino-acid sequence, 214 residues long: Thymidylate kinase (214 aa).

7 to 14 (GIDGAGKS) is a binding site for ATP.

This sequence belongs to the thymidylate kinase family.

The catalysed reaction is dTMP + ATP = dTDP + ADP. In terms of biological role, phosphorylation of dTMP to form dTDP in both de novo and salvage pathways of dTTP synthesis. In Chlorobium luteolum (strain DSM 273 / BCRC 81028 / 2530) (Pelodictyon luteolum), this protein is Thymidylate kinase.